We begin with the raw amino-acid sequence, 208 residues long: Dual specificity protein phosphatase 22-A (208 aa).

The region spanning 4–144 (GMNKVIDGLY…LQEFQMKQVS (141 aa)) is the Tyrosine-protein phosphatase domain. Residue Cys88 is the Phosphocysteine intermediate of the active site.

Belongs to the protein-tyrosine phosphatase family. Non-receptor class dual specificity subfamily.

It is found in the cytoplasm. The protein localises to the nucleus. It carries out the reaction O-phospho-L-tyrosyl-[protein] + H2O = L-tyrosyl-[protein] + phosphate. It catalyses the reaction O-phospho-L-seryl-[protein] + H2O = L-seryl-[protein] + phosphate. The enzyme catalyses O-phospho-L-threonyl-[protein] + H2O = L-threonyl-[protein] + phosphate. Its function is as follows. Activates the Jnk signaling pathway. Dephosphorylates and deactivates p38 and stress-activated protein kinase/c-Jun N-terminal kinase (SAPK/JNK). The sequence is that of Dual specificity protein phosphatase 22-A from Danio rerio (Zebrafish).